A 359-amino-acid chain; its full sequence is Histidinol-phosphate aminotransferase (359 aa).

At lysine 217 the chain carries N6-(pyridoxal phosphate)lysine.

This sequence belongs to the class-II pyridoxal-phosphate-dependent aminotransferase family. Histidinol-phosphate aminotransferase subfamily. As to quaternary structure, homodimer. Pyridoxal 5'-phosphate is required as a cofactor.

It catalyses the reaction L-histidinol phosphate + 2-oxoglutarate = 3-(imidazol-4-yl)-2-oxopropyl phosphate + L-glutamate. It participates in amino-acid biosynthesis; L-histidine biosynthesis; L-histidine from 5-phospho-alpha-D-ribose 1-diphosphate: step 7/9. The polypeptide is Histidinol-phosphate aminotransferase (hisC) (Salmonella typhimurium (strain LT2 / SGSC1412 / ATCC 700720)).